A 256-amino-acid polypeptide reads, in one-letter code: SPX domain-containing protein 1 (256 aa).

The 155-residue stretch at 1 to 155 (MKFGKSLSNQ…GDLMRLPFIQ (155 aa)) folds into the SPX domain. Residues 30–46 (KRLKLIGSKTADRPVKR) carry the Bipartite nuclear localization signal motif.

Interacts with PHR1 in a highly Pi-dependent manner.

The protein resides in the nucleus. Its function is as follows. Plays a positive role in plant adaptation to phosphate starvation. Inhibits PHR1 DNA-binding activity in a Pi-dependent manner. In Arabidopsis thaliana (Mouse-ear cress), this protein is SPX domain-containing protein 1.